The sequence spans 405 residues: Protein PAG1 (405 aa).

The N-terminal stretch at 1 to 50 (MVSLIILFRLTFAIANRVRTLMKVLVIVSFFVLTGSASADSGALSLSGAA) is a signal peptide. 4 N-linked (GlcNAc...) asparagine glycosylation sites follow: Asn-55, Asn-104, Asn-256, and Asn-351. Residue Ala-391 is the site of GPI-anchor amidated alanine attachment. The propeptide at 392-405 (DSLRRTLALLFLLF) is removed in mature form.

It is found in the cell membrane. In Trypanosoma brucei brucei, this protein is Protein PAG1 (PAG1).